The chain runs to 160 residues: Ribosome maturation factor RimP (160 aa).

This sequence belongs to the RimP family.

The protein resides in the cytoplasm. Its function is as follows. Required for maturation of 30S ribosomal subunits. This Cronobacter sakazakii (strain ATCC BAA-894) (Enterobacter sakazakii) protein is Ribosome maturation factor RimP.